We begin with the raw amino-acid sequence, 264 residues long: Astacin-like metalloprotease toxin 1 (264 aa).

The N-terminal stretch at 1–16 (MIKYIGVFAFLVGGFC) is a signal peptide. A propeptide spanning residues 17 to 51 (HDFETVISNQDPIVDGMRLVEGDMLFDDGPLFTER) is cleaved from the precursor. The region spanning 52 to 249 (NAVKYDQQLW…VKVNKLYKCP (198 aa)) is the Peptidase M12A domain. Cystine bridges form between Cys93-Cys248 and Cys114-Cys135. Zn(2+) is bound at residue His143. Residue Glu144 is part of the active site. His147 and His153 together coordinate Zn(2+). Residues Asn173 and Asn185 are each glycosylated (N-linked (GlcNAc...) asparagine).

Monomer. It depends on Zn(2+) as a cofactor. In terms of tissue distribution, expressed by the venom gland.

It is found in the secreted. Inhibited by 1,10-phenanthroline. Functionally, zinc metalloprotease. Provoques deadhesion of endothelial cells from cell cultures, and also degradation of fibronectin, fibrinogen and gelatin in vitro. Its role in the venom is not fully understood but it might act as a spreading factor that facilitates diffusion of other venom toxins. Alternatively, it might be involved in the proteolytic processing of other venom toxins or it might play a role in extra-oral digestion of prey. The sequence is that of Astacin-like metalloprotease toxin 1 from Loxosceles intermedia (Brown spider).